The primary structure comprises 577 residues: MLSCDICGETVTSEPDRKAHLIVHMENEIICPFCKLSGINYNEMCFHIETAHFEQTTPEKSFETLAAVQYENSDLGNTKLHSTVEVTSGIHSACASNFPKESSESLSKDRTLKQEAFYTESVAESRKYQKSREKQSGLSEAQGSIYETTYSPPECPFCGRIERYSQDMEIHVKTKHASLLESPLEDCHQPLYDCPMCGLVCTNYHILQEHVDLHLEESSFQQGMDRVQCSSDRELAHQLQQEEERKRKSEESRQEREEFQKLQRQYGLDNSGGYKQQQLRHMELEVTRGRMHPSEFHSRKADMLESIAVGIDDGKTKTSGIIEALHRYYQNIATDVRCVWLSTVVDHFHSSFGDKGWGCGYRNFQMLLSSLLQNEVYSDCLKGMSVPCIPKIQSMIEDAWNEGFDPQGASQLNNKLQGTKAWIGACEIYTLLTSLKVKCRIIDFHKSTGPSGTHPRLFEWILNYYSSETEGAPKVVCTSKPPVYLQHQGHSRTVVGIEERKNRTLCLLIFDPGCPSREMQKLLKQDMEAGSLRQLRKCVGNLKHKQYQIVAVEGILSPEERAARKQASQVFTAEKIP.

The C2H2-type 1 zinc-finger motif lies at 2–24 (LSCDICGETVTSEPDRKAHLIVH). Residues 29 to 52 (IICPFCKLSGINYNEMCFHIETAH) form a C2H2-type 2; atypical zinc finger. 2 C2H2-type zinc fingers span residues 153–176 (PECP…KTKH) and 192–214 (YDCP…VDLH). The segment at 225-247 (DRVQCSSDRELAHQLQQEEERKR) is MIU. The span at 231–261 (SDRELAHQLQQEEERKRKSEESRQEREEFQK) shows a compositional bias: basic and acidic residues. The segment at 231 to 262 (SDRELAHQLQQEEERKRKSEESRQEREEFQKL) is disordered. Residues 248 to 273 (KSEESRQEREEFQKLQRQYGLDNSGG) are zUBD/ZHA. Residue Lys-261 is modified to N6-acetyllysine. The Nucleophile role is filled by Cys-359. Catalysis depends on His-490, which acts as the Proton acceptor. The active site involves Asp-511.

The protein belongs to the peptidase C78 family. ZUFSP subfamily. As to quaternary structure, interacts with RPA1 and RPA2.

The protein resides in the cytoplasm. Its subcellular location is the nucleus. The catalysed reaction is Thiol-dependent hydrolysis of ester, thioester, amide, peptide and isopeptide bonds formed by the C-terminal Gly of ubiquitin (a 76-residue protein attached to proteins as an intracellular targeting signal).. In terms of biological role, deubiquitinase with endodeubiquitinase activity that specifically interacts with and cleaves 'Lys-63'-linked long polyubiquitin chains. Shows only weak activity against 'Lys-11' and 'Lys-48'-linked chains. Plays an important role in genome stability pathways, functioning to prevent spontaneous DNA damage and also promote cellular survival in response to exogenous DNA damage. Modulates the ubiquitination status of replication protein A (RPA) complex proteins in response to replication stress. The sequence is that of Zinc finger-containing ubiquitin peptidase 1 from Rattus norvegicus (Rat).